The chain runs to 747 residues: DNA repair and recombination protein RAD54-like (747 aa).

The segment at 1–42 is disordered; the sequence is MRRSLAPSQLARRKPEDRSSDDEDWQPGTVTPKKRKSSSETQ. The segment at 2–9 is required for chromatin remodeling, strand pairing activities and coupling of ATPase activity; that stretch reads RRSLAPSQ. The residue at position 38 (Ser38) is a Phosphoserine. Residues 170-345 enclose the Helicase ATP-binding domain; the sequence is SRRIPGSHGC…FSLVHFVNSG (176 aa). 183-190 contacts ATP; it reads DEMGLGKT. Residues 296-299 carry the DEGH box motif; it reads DEGH. In terms of domain architecture, Helicase C-terminal spans 500–653; sequence VLDYILAVTR…CVVDEEQDVE (154 aa). Position 515 is an N6-acetyllysine (Lys515). Phosphoserine; by NEK1 is present on Ser572.

This sequence belongs to the SNF2/RAD54 helicase family. Homohexamer. Interacts (via N-terminus) with RAD51. Interacts with NAP1L1. Interacts with BRD9; this interaction orchestrates RAD51-RAD54 complex formation. Post-translationally, acetylated. Acetylation promotes interaction with BRD9, and subsequently with RAD54, which is essential for homologous recombination (HR). In terms of processing, phosphorylated. Phosphorylation at Ser-572 by NEK1 specifically in G2 phase allows efficient removal of RAD51 filaments from DNA. In terms of tissue distribution, hardly detectable in most tissues. Dramatically increased in thymus, spleen and testis.

It is found in the nucleus. The catalysed reaction is ATP + H2O = ADP + phosphate + H(+). Its function is as follows. Plays an essential role in homologous recombination (HR) which is a major pathway for repairing DNA double-strand breaks (DSBs), single-stranded DNA (ssDNA) gaps, and stalled or collapsed replication forks. Acts as a molecular motor during the homology search and guides RAD51 ssDNA along a donor dsDNA thereby changing the homology search from the diffusion-based mechanism to a motor-guided mechanism. Plays also an essential role in RAD51-mediated synaptic complex formation which consists of three strands encased in a protein filament formed once homology is recognized. Once DNA strand exchange occured, dissociates RAD51 from nucleoprotein filaments formed on dsDNA. Deficiency also resulted in an increased frequency of end-to-end chromosome fusions involving telomeres compared to the controls, suggesting a putative role in telomere capping. Non-homologous end joining (NHEJ) and homologous recombination (HR) represent the two major pathways of DNA double-strand break (DSB) repair in eukaryotic cells. LIG4 and RAD54L cooperate to support cellular proliferation, repair spontaneous DSBs, and prevent chromosome and single chromatid aberrations. The sequence is that of DNA repair and recombination protein RAD54-like (Rad54l) from Mus musculus (Mouse).